Here is a 294-residue protein sequence, read N- to C-terminus: Nucleophosmin (294 aa).

Methionine 1 bears the N-acetylmethionine mark. A necessary for interaction with APEX1 region spans residues 1 to 117 (MEDSMDMDMS…PVHISGQHLV (117 aa)). Residues 1-187 (MEDSMDMDMS…DDDDDFDEEV (187 aa)) are required for interaction with SENP3. Serine 4 carries the post-translational modification Phosphoserine; by PLK1 and PLK2. A Phosphoserine modification is found at serine 10. Lysine 32 carries the N6-acetyllysine; alternate modification. Lysine 32 is covalently cross-linked (Glycyl lysine isopeptide (Lys-Gly) (interchain with G-Cter in SUMO1); alternate). Residue lysine 32 forms a Glycyl lysine isopeptide (Lys-Gly) (interchain with G-Cter in SUMO2); alternate linkage. A Phosphoserine modification is found at serine 43. Tyrosine 67 carries the phosphotyrosine modification. A Phosphoserine modification is found at serine 70. Residues threonine 75 and threonine 95 each carry the phosphothreonine modification. The span at 121–132 (EDAESEEEEEEE) shows a compositional bias: acidic residues. Positions 121–249 (EDAESEEEEE…GPSSVEDIKA (129 aa)) are disordered. Phosphoserine; by CDK2 is present on serine 125. Phosphoserine is present on residues serine 137 and serine 139. Lysine 141 is covalently cross-linked (Glycyl lysine isopeptide (Lys-Gly) (interchain with G-Cter in SUMO2)). Position 150 is an N6-acetyllysine; alternate (lysine 150). Lysine 150 participates in a covalent cross-link: Glycyl lysine isopeptide (Lys-Gly) (interchain with G-Cter in SUMO2); alternate. The Nuclear localization signal signature appears at 152–157 (PQKKVK). Lysine 154 carries the N6-acetyllysine modification. Over residues 161–188 (DEDEDDDDDDDDDDDEDDDDDDFDEEVE) the composition is skewed to acidic residues. Residues 188–216 (EEKAPVKKSVRDTPAKNAQKSNQNGKDSK) form an interaction with NOP2 region. Over residues 189–201 (EKAPVKKSVRDTP) the composition is skewed to basic and acidic residues. Residues 192-198 (PVKKSVR) carry the Nuclear localization signal motif. Threonine 200 carries the phosphothreonine; by CDK1 and CDK2 modification. A compositionally biased stretch (polar residues) spans 203 to 222 (KNAQKSNQNGKDSKPSTPRS). Serine 208 bears the ADP-ribosylserine mark. Lysine 213 is modified (N6-acetyllysine). A Glycyl lysine isopeptide (Lys-Gly) (interchain with G-Cter in SUMO2) cross-link involves residue lysine 216. Phosphothreonine; by CDK1 is present on threonine 219. Residues 223-235 (KGQESFKKQEKTP) show a composition bias toward basic and acidic residues. Serine 227 is subject to Phosphoserine. Lysine 229 carries the post-translational modification N6-acetyllysine. Lysine 230 carries the post-translational modification N6-acetyllysine; alternate. A Glycyl lysine isopeptide (Lys-Gly) (interchain with G-Cter in SUMO); alternate cross-link involves residue lysine 230. A phosphothreonine mark is found at threonine 234 and threonine 237. A phosphoserine mark is found at serine 242 and serine 243. Residues 243–294 (SVEDIKAKMQASIEKGGSLPKVEAKFINYVKNCFRMTDQEAIQDLWQWRKSL) are required for nucleolar localization. Lysine 248 is covalently cross-linked (Glycyl lysine isopeptide (Lys-Gly) (interchain with G-Cter in SUMO1); alternate). Residues lysine 248 and lysine 250 each participate in a glycyl lysine isopeptide (Lys-Gly) (interchain with G-Cter in SUMO2); alternate cross-link. N6-acetyllysine; alternate is present on lysine 250. The residue at position 254 (serine 254) is a Phosphoserine. Residue lysine 257 is modified to N6-acetyllysine; alternate. Lysine 257 is covalently cross-linked (Glycyl lysine isopeptide (Lys-Gly) (interchain with G-Cter in SUMO1); alternate). Lysine 257 participates in a covalent cross-link: Glycyl lysine isopeptide (Lys-Gly) (interchain with G-Cter in SUMO2); alternate. Residue serine 260 is modified to Phosphoserine. Glycyl lysine isopeptide (Lys-Gly) (interchain with G-Cter in SUMO2); alternate cross-links involve residues lysine 263, lysine 267, and lysine 273. Residue lysine 263 forms a Glycyl lysine isopeptide (Lys-Gly) (interchain with G-Cter in SUMO); alternate linkage. 2 positions are modified to N6-acetyllysine; alternate: lysine 267 and lysine 273. Residue lysine 267 forms a Glycyl lysine isopeptide (Lys-Gly) (interchain with G-Cter in SUMO1); alternate linkage. Position 267 is an N6-succinyllysine; alternate (lysine 267). Threonine 279 carries the phosphothreonine modification. Residue lysine 292 is modified to N6-acetyllysine.

Belongs to the nucleoplasmin family. In terms of assembly, decamer formed by two pentameric rings associated in a head-to-head fashion. Disulfide-linked dimers under certain conditions. The SWAP complex consists of NPM1, NCL, PARP1 and SWAP70. Interacts with NSUN2 and SENP3. Interacts with the methylated form of RPS10. Interacts (via N-terminal domain) with APEX1; the interaction is RNA-dependent and decreases in hydrogen peroxide-damaged cells. Interacts with isoform 1 of NEK2. Interacts with ROCK2 and BRCA2. Interacts with RPGR. Interacts with CENPW. Interacts with EIF2AK2/PKR. Interacts with CEBPA (isoform 4). Interacts with DDX31; this interaction prevents interaction between NPM1 and HDM2. Interacts with MYC; competitive with NOP53. Interacts with NOP53; the interaction is direct and competitive with MYC. Interacts with LRRC34. Interacts with RRP1B. Interacts with NPM3. Interacts with ALKBH2. Interacts with TTF1 (via C-terminal region). Interacts with NOP2. Interacts with ARID3C (via REKLES DOMAIN); the interaction mediates ARID3C nuclear shuttling. In terms of processing, acetylated at C-terminal lysine residues, thereby increasing affinity to histones. ADP-ribosylated. Post-translationally, phosphorylated at Ser-4 by PLK1 and PLK2. Phosphorylation at Ser-4 by PLK2 in S phase is required for centriole duplication and is sufficient to trigger centriole replication. Phosphorylation at Ser-4 by PLK1 takes place during mitosis. Phosphorylated by CDK2 at Ser-125 and Thr-200. Phosphorylation at Thr-200 may trigger initiation of centrosome duplication. Phosphorylated by CDK1 at Thr-200, Thr-219, Thr-234 and Thr-237 during cell mitosis. When these four sites are phosphorated, RNA-binding activity seem to be abolished. May be phosphorylated at Ser-70 by NEK2. The Thr-200 phosphorylated form has higher affinity for ROCK2. In terms of processing, sumoylated by ARF. May be ubiquitinated. Ubiquitination leads to proteasomal degradation. Deubiquitinated by USP36.

The protein localises to the nucleus. Its subcellular location is the nucleolus. It localises to the nucleoplasm. The protein resides in the cytoplasm. It is found in the cytoskeleton. The protein localises to the microtubule organizing center. Its subcellular location is the centrosome. Involved in diverse cellular processes such as ribosome biogenesis, centrosome duplication, protein chaperoning, histone assembly, cell proliferation, and regulation of tumor suppressors p53/TP53 and ARF. Binds ribosome presumably to drive ribosome nuclear export. Associated with nucleolar ribonucleoprotein structures and bind single-stranded nucleic acids. Acts as a chaperonin for the core histones H3, H2B and H4. Stimulates APEX1 endonuclease activity on apurinic/apyrimidinic (AP) double-stranded DNA but inhibits APEX1 endonuclease activity on AP single-stranded RNA. May exert a control of APEX1 endonuclease activity within nucleoli devoted to repair AP on rDNA and the removal of oxidized rRNA molecules. In concert with BRCA2, regulates centrosome duplication. Regulates centriole duplication: phosphorylation by PLK2 is able to trigger centriole replication. Negatively regulates the activation of EIF2AK2/PKR and suppresses apoptosis through inhibition of EIF2AK2/PKR autophosphorylation. Antagonizes the inhibitory effect of ATF5 on cell proliferation and relieves ATF5-induced G2/M blockade. In complex with MYC enhances the transcription of MYC target genes. May act as chaperonin or cotransporter in the nucleolar localization of transcription termination factor TTF1. The sequence is that of Nucleophosmin (NPM1) from Bos taurus (Bovine).